Reading from the N-terminus, the 305-residue chain is MNAPSSAAGHVSSHWRQYVALTKPRVVQLIVFCAAIGMLLAVPGAPGLADLGKALWATLGIWLVASAAAAFNCLIEQQIDSRMKRTAWRPTARGELSRTQALIFSAVLCSAGMAVLHEAVNPLTAWLTLGTFVGYAVIYTVVLKPLTPQNIVIGGISGAMPPLLGWAAMTGEVGPEGLILCLIIFLWTPPHFWALALYRAEDYARAGLPMLPVTHGNEFTRLQILLYTFVLLAGTLLPFVQGMSGWLYLAAAFVLGLRFIHYAWRLWRNYSEALARQTFRFSIWHLSLLFAALLVDHYTQDLLTL.

9 consecutive transmembrane segments (helical) span residues 29 to 49 (LIVF…PGLA), 55 to 75 (LWAT…NCLI), 101 to 121 (ALIF…EAVN), 123 to 143 (LTAW…TVVL), 151 to 171 (IVIG…AMTG), 177 to 197 (GLIL…ALAL), 219 to 241 (FTRL…PFVQ), 246 to 268 (WLYL…RLWR), and 283 to 303 (IWHL…QDLL).

It belongs to the UbiA prenyltransferase family. Protoheme IX farnesyltransferase subfamily.

It is found in the cell inner membrane. The catalysed reaction is heme b + (2E,6E)-farnesyl diphosphate + H2O = Fe(II)-heme o + diphosphate. Its pathway is porphyrin-containing compound metabolism; heme O biosynthesis; heme O from protoheme: step 1/1. Functionally, converts heme B (protoheme IX) to heme O by substitution of the vinyl group on carbon 2 of heme B porphyrin ring with a hydroxyethyl farnesyl side group. The polypeptide is Protoheme IX farnesyltransferase (Leptothrix cholodnii (strain ATCC 51168 / LMG 8142 / SP-6) (Leptothrix discophora (strain SP-6))).